A 288-amino-acid polypeptide reads, in one-letter code: MTLWTFLAMEPAYFITLATVLGLLVGSFLNVVVYRLPIMLERQWQREAHEVLGLPVTEHERFDLCLPASQCTQCGHRIRAWENLPVLSYLALRGRCSACKQRISVRYPLVEVGCALLSMVVAWRYGASVEALVLLPLTWSLLALSLIDHDQQLLPDAIVLPGLWLGLIVNYFGVWVPLPDAVCGAVVGYLSLWTVYWLFKLVTGKEGMGYGDFKLLALLGAWGGWQVLPLTLLLSSVLGALVGVYLLRVRNDSMGTAMPFGPYLAIAGWIAVLWGDEIYASNMQLLGF.

A helical transmembrane segment spans residues 14–34; that stretch reads FITLATVLGLLVGSFLNVVVY. Cys-71, Cys-74, Cys-96, and Cys-99 together coordinate Zn(2+). 6 helical membrane passes run 103–123, 127–147, 158–178, 182–202, 227–247, and 254–274; these read ISVR…VVAW, ASVE…LSLI, IVLP…WVPL, VCGA…FKLV, VLPL…VYLL, and MGTA…AVLW.

It belongs to the peptidase A24 family. Zn(2+) is required as a cofactor.

It localises to the cell inner membrane. The catalysed reaction is Typically cleaves a -Gly-|-Phe- bond to release an N-terminal, basic peptide of 5-8 residues from type IV prepilin, and then N-methylates the new N-terminal amino group, the methyl donor being S-adenosyl-L-methionine.. Its function is as follows. Plays an essential role in type IV pili and type II pseudopili formation by proteolytically removing the leader sequence from substrate proteins and subsequently monomethylating the alpha-amino group of the newly exposed N-terminal phenylalanine. The polypeptide is Prepilin leader peptidase/N-methyltransferase (pilD) (Pseudomonas putida (Arthrobacter siderocapsulatus)).